The following is a 30-amino-acid chain: Cycloviolacin-O5 (30 aa).

Residues 1–30 constitute a cross-link (cyclopeptide (Gly-Asn)); that stretch reads GTPCGESCVWIPCISSAVGCSCKNKVCYKN. 3 disulfide bridges follow: Cys4–Cys20, Cys8–Cys22, and Cys13–Cys27.

This is a cyclic peptide.

Functionally, probably participates in a plant defense mechanism. The protein is Cycloviolacin-O5 of Viola odorata (Sweet violet).